Reading from the N-terminus, the 463-residue chain is Trigger factor (463 aa).

The PPIase FKBP-type domain maps to 162-243 (GDHVSIDLSA…VHSVKLKELP (82 aa)). Over residues 427-444 (SGNTIEPPTPVHTETITV) the composition is skewed to polar residues. The disordered stretch occupies residues 427–463 (SGNTIEPPTPVHTETITVASGDEETEESAAEQGETEK).

Belongs to the FKBP-type PPIase family. Tig subfamily.

The protein resides in the cytoplasm. It catalyses the reaction [protein]-peptidylproline (omega=180) = [protein]-peptidylproline (omega=0). Involved in protein export. Acts as a chaperone by maintaining the newly synthesized protein in an open conformation. Functions as a peptidyl-prolyl cis-trans isomerase. The sequence is that of Trigger factor from Thermobifida fusca (strain YX).